Consider the following 238-residue polypeptide: MAADGQCSLPASWRPVTLTHVEYPAGDLSGHLLAYLSLSPIFVVVGFLTLIIFKRELHTISFLGGLALNQGVNWLIKHVIQEPRPCGGPHTAVGTKYGMPSSHSQFMWFFSVYSFLFLYLRMHQTNNARFLDLLWRHVLSLGLLTAAFLVSYSRVYLLYHTWSQVFYGGVAGSLMAVAWFIITQEILTPLFPRIAAWPISEFFLIRDTSLIPNVLWFEYTVTRAEARNRQRKLGTKLQ.

4 helical membrane passes run 33 to 53 (LAYL…LIIF), 100 to 120 (PSSH…FLYL), 130 to 150 (FLDL…AFLV), and 162 to 182 (WSQV…WFII).

Belongs to the dolichyldiphosphatase family. In terms of tissue distribution, widely expressed with highest levels in brain, kidney, lung and intestine.

It localises to the endoplasmic reticulum membrane. The catalysed reaction is a di-trans,poly-cis-dolichyl diphosphate + H2O = a di-trans,poly-cis-dolichyl phosphate + phosphate + H(+). The protein operates within protein modification; protein glycosylation. Its function is as follows. Required for efficient N-glycosylation. Necessary for maintaining optimal levels of dolichol-linked oligosaccharides. Hydrolyzes dolichyl pyrophosphate at a very high rate and dolichyl monophosphate at a much lower rate. Does not act on phosphatidate. In Mus musculus (Mouse), this protein is Dolichyldiphosphatase 1 (Dolpp1).